A 90-amino-acid chain; its full sequence is Trp-8 progonadoliberin (90 aa).

A signal peptide spans 1–24 (MSRHVTVVLLLAVVLLLSSHMSHG). The residue at position 25 (Q25) is a Pyrrolidone carboxylic acid. G34 bears the Glycine amide mark.

The protein belongs to the GnRH family. As to expression, expressed in forebrain but not in testis, ovary, kidney and liver.

The protein localises to the secreted. Functionally, stimulates the secretion of gonadotropins. The sequence is that of Trp-8 progonadoliberin from Rana dybowskii (Dybovsky's frog).